The following is a 230-amino-acid chain: Ribonuclease 3 (230 aa).

An RNase III domain is found at Y5–D125. Residue E40 participates in Mg(2+) binding. D44 is a catalytic residue. Mg(2+) is bound by residues D111 and E114. The active site involves E114. In terms of domain architecture, DRBM spans D153–Q223.

This sequence belongs to the ribonuclease III family. In terms of assembly, homodimer. It depends on Mg(2+) as a cofactor.

It localises to the cytoplasm. The enzyme catalyses Endonucleolytic cleavage to 5'-phosphomonoester.. Its function is as follows. Digests double-stranded RNA. Involved in the processing of primary rRNA transcript to yield the immediate precursors to the large and small rRNAs (23S and 16S). Processes some mRNAs, and tRNAs when they are encoded in the rRNA operon. Processes pre-crRNA and tracrRNA of type II CRISPR loci if present in the organism. The polypeptide is Ribonuclease 3 (Francisella tularensis subsp. tularensis (strain FSC 198)).